The primary structure comprises 636 residues: Multicopper oxidase CTB12 (636 aa).

The N-terminal stretch at 1–23 (MWSVRLYPLALTLLFQCVSPAAA) is a signal peptide. Residues 62–168 (AGIGFREAIF…LYGAVVIAPD (107 aa)) form the Plastocyanin-like 1 domain. Residues histidine 104 and histidine 106 each coordinate Cu cation. Asparagine 136 carries N-linked (GlcNAc...) asparagine glycosylation. 2 residues coordinate Cu cation: histidine 148 and histidine 150. N-linked (GlcNAc...) asparagine glycosylation is present at asparagine 304. The region spanning 318–381 (LTFVNPGGLY…QEKARHVVRV (64 aa)) is the Plastocyanin-like 2 domain. A glycan (N-linked (GlcNAc...) asparagine) is linked at asparagine 472. A Plastocyanin-like 3 domain is found at 486–613 (NVEDVPATEL…GGMGMVVLDG (128 aa)). Cu cation contacts are provided by histidine 519, histidine 522, and histidine 524. N-linked (GlcNAc...) asparagine glycosylation occurs at asparagine 576. Positions 595, 596, 597, and 601 each coordinate Cu cation.

It belongs to the multicopper oxidase family.

Its pathway is mycotoxin biosynthesis. Its function is as follows. Multicopper oxidase; part of the gene cluster that mediates the biosynthesis of cercosporin, a light-activated, non-host-selective toxin. The perylenequinone chromophore of cercosporin absorbs light energy to attain an electronically-activated triplet state and produces active oxygen species such as the hydroxyl radical, superoxide, hydrogen peroxide or singlet oxygen upon reaction with oxygen molecules. These reactive oxygen species cause damage to various cellular components including lipids, proteins and nucleic acids. The first step of cercosporin biosynthesis is performed by the polyketide synthase CTB1 which catalyzes the formation of nor-toralactone. The starter unit acyltransferase (SAT) domain of CTB1 initiates polyketide extension by the selective utilization of acetyl-CoA, which is elongated to the heptaketide in the beta-ketoacyl synthase (KS) domain by successive condensations with six malonyl units introduced by the malonyl acyltransferase (MAT) domain. The product template (PT) domain catalyzes C4-C9 and C2-C11 aldol cyclizations and dehydrations to a trihydroxynaphthalene, which is thought to be delivered to the thioesterase (TE) domain for product release. The bifunctional enzyme CTB3 then methylates nor-toralactone to toralactone before conducting an unusual oxidative aromatic ring opening. The O-methyltransferase CTB2 further methylates the nascent OH-6 of the CBT3 product, blocking further oxidation at this site before the reductase CTB6 reduces the 2-oxopropyl ketone at position C7, giving naphthalene. The FAD-dependent monooxygenase CTB5 in concert with the multicopper oxidase CTB12 are responsible for homodimerization of naphthalene with CTB7 installing the dioxepine moiety, finally producing cercosporin. The fasciclin domain-containing protein CTB11 might act with CTB5 and CTB12 whereas the roles of CTB9 and CTB10 have still to be elucidated. The sequence is that of Multicopper oxidase CTB12 from Cercospora beticola (Sugarbeet leaf spot fungus).